The sequence spans 421 residues: Tol-Pal system protein TolB (421 aa).

A signal peptide spans Met-1–Ala-16.

It belongs to the TolB family. As to quaternary structure, the Tol-Pal system is composed of five core proteins: the inner membrane proteins TolA, TolQ and TolR, the periplasmic protein TolB and the outer membrane protein Pal. They form a network linking the inner and outer membranes and the peptidoglycan layer.

It is found in the periplasm. Part of the Tol-Pal system, which plays a role in outer membrane invagination during cell division and is important for maintaining outer membrane integrity. The chain is Tol-Pal system protein TolB from Wolinella succinogenes (strain ATCC 29543 / DSM 1740 / CCUG 13145 / JCM 31913 / LMG 7466 / NCTC 11488 / FDC 602W) (Vibrio succinogenes).